The chain runs to 182 residues: NADH-quinone oxidoreductase subunit B 1 (182 aa).

Residues cysteine 47, cysteine 48, cysteine 113, and cysteine 142 each contribute to the [4Fe-4S] cluster site.

This sequence belongs to the complex I 20 kDa subunit family. NDH-1 is composed of 14 different subunits. Subunits NuoB, C, D, E, F, and G constitute the peripheral sector of the complex. It depends on [4Fe-4S] cluster as a cofactor.

Its subcellular location is the cell inner membrane. The enzyme catalyses a quinone + NADH + 5 H(+)(in) = a quinol + NAD(+) + 4 H(+)(out). NDH-1 shuttles electrons from NADH, via FMN and iron-sulfur (Fe-S) centers, to quinones in the respiratory chain. Couples the redox reaction to proton translocation (for every two electrons transferred, four hydrogen ions are translocated across the cytoplasmic membrane), and thus conserves the redox energy in a proton gradient. This chain is NADH-quinone oxidoreductase subunit B 1, found in Anaeromyxobacter dehalogenans (strain 2CP-C).